The following is a 351-amino-acid chain: Putative aminodehydroquinate synthase (351 aa).

Residues 65 to 68, 97 to 101, 121 to 122, Lys-134, Lys-143, and 161 to 164 each bind NAD(+); these read EPTK, GTTTD, TS, and YLTT. Zn(2+) is bound by residues Glu-176, His-225, and His-241.

This sequence belongs to the sugar phosphate cyclases superfamily. aDHQS family. It depends on NAD(+) as a cofactor. The cofactor is Co(2+). Requires Zn(2+) as cofactor.

In terms of biological role, may catalyze the conversion of 3,4-dideoxy-4-amino-D-arabino-heptulosonate 7-phosphate (aDAHP) to 5-deoxy-5-amino-3-dehydroquinate (aDHQ). Probably involved in the formation of 3-amino-5-hydroxybenzoic acid (AHBA), the precursor of rifamycin and related ansamycins. In Amycolatopsis mediterranei (strain S699) (Nocardia mediterranei), this protein is Putative aminodehydroquinate synthase.